A 606-amino-acid chain; its full sequence is Melanoma-associated antigen D2 (606 aa).

Disordered stretches follow at residues 1-29 and 52-204; these read MSDT…MMQT and SEDV…GGRR. Serine 2 bears the N-acetylserine mark. Residue serine 5 is modified to Phosphoserine. Threonine 72 is subject to Phosphothreonine. Residues 79-100 are compositionally biased toward polar residues; that stretch reads PATQASSTTQLTDTQVLATENK. Basic and acidic residues predominate over residues 122-131; that stretch reads ETKKVSHVAD. Positions 142-164 are enriched in low complexity; that stretch reads EAAPSQASADEPEPESAAAQSQE. Position 157 is a phosphoserine (serine 157). Positions 171 to 181 are enriched in basic residues; it reads KVKAKKARKVK. Phosphoserine is present on residues serine 190, serine 191, serine 194, serine 197, serine 244, and serine 247. Positions 248–260 are enriched in basic residues; that stretch reads PKARRGKARRRAA. The interval 248–275 is disordered; it reads PKARRGKARRRAAKLQSSQEPEAPPPRD. Serine 264 and serine 265 each carry phosphoserine. The 200-residue stretch at 279 to 478 folds into the MAGE domain; sequence LQGRANDLVK…KEWAAQYREA (200 aa). The disordered stretch occupies residues 534 to 563; sequence GAEAKAKAQESGSASTGASTSTNNSASASA.

Interacts with GNAS.

Its function is as follows. Regulates the expression, localization to the plasma membrane and function of the sodium chloride cotransporters SLC12A1 and SLC12A3, two key components of salt reabsorption in the distal renal tubule. In Pongo abelii (Sumatran orangutan), this protein is Melanoma-associated antigen D2 (MAGED2).